Reading from the N-terminus, the 326-residue chain is MSEFPFFSPQPLFSYMMNKNSRVHTDSNIRNTFFTEIGIGILANSFLLLFHIFKFIRGQRSRLTDLPIGLLSLIHLLMLLMGAFIAIDIFISWRGWDDIICKFLVYLYRSFRGLSLCTTCMLSVLQAITLSPRSSCLAKFKHKSPHHVSCAIISLSILYMFISSHLLVSINATPNLTTNNFMQVTQSCYIIPLSYLMQSMFSTLLAIRDISLISLMVLSTCYMVVLLCRHRNQIQHLQGTNLSPKASPEQRATQTILMLMTFFVLMSIFDSIVSCSRTMYLNDPTSYYIQIFVVYIYATVSPFVFMSTEKHIVNFLKSMCVRVKNV.

The Extracellular segment spans residues 1–32 (MSEFPFFSPQPLFSYMMNKNSRVHTDSNIRNT). A helical transmembrane segment spans residues 33–53 (FFTEIGIGILANSFLLLFHIF). The Cytoplasmic segment spans residues 54–70 (KFIRGQRSRLTDLPIGL). The helical transmembrane segment at 71–91 (LSLIHLLMLLMGAFIAIDIFI) threads the bilayer. Over 92-104 (SWRGWDDIICKFL) the chain is Extracellular. An intrachain disulfide couples C101 to C188. The chain crosses the membrane as a helical span at residues 105–127 (VYLYRSFRGLSLCTTCMLSVLQA). Topologically, residues 128 to 149 (ITLSPRSSCLAKFKHKSPHHVS) are cytoplasmic. Residues 150 to 170 (CAIISLSILYMFISSHLLVSI) form a helical membrane-spanning segment. The Extracellular segment spans residues 171–209 (NATPNLTTNNFMQVTQSCYIIPLSYLMQSMFSTLLAIRD). An N-linked (GlcNAc...) asparagine glycan is attached at N175. The chain crosses the membrane as a helical span at residues 210–230 (ISLISLMVLSTCYMVVLLCRH). Over 231 to 254 (RNQIQHLQGTNLSPKASPEQRATQ) the chain is Cytoplasmic. Residues 255–275 (TILMLMTFFVLMSIFDSIVSC) traverse the membrane as a helical segment. At 276 to 285 (SRTMYLNDPT) the chain is on the extracellular side. Residues 286–306 (SYYIQIFVVYIYATVSPFVFM) form a helical membrane-spanning segment. Residues 307-326 (STEKHIVNFLKSMCVRVKNV) lie on the Cytoplasmic side of the membrane.

The protein belongs to the G-protein coupled receptor 1 family. In terms of tissue distribution, expressed in 1-4% of neurons of the vomeronasal organ. Only one pheromone receptor gene may be expressed in a particular neuron. Not expressed in the main olfactory epithelium.

Its subcellular location is the cell membrane. In terms of biological role, putative pheromone receptor implicated in the regulation of social as well as reproductive behavior. The protein is Vomeronasal type-1 receptor 100 (Vom1r100) of Rattus norvegicus (Rat).